The primary structure comprises 97 residues: Small ribosomal subunit protein bS20 (97 aa).

The protein belongs to the bacterial ribosomal protein bS20 family.

Functionally, binds directly to 16S ribosomal RNA. This chain is Small ribosomal subunit protein bS20, found in Synechocystis sp. (strain ATCC 27184 / PCC 6803 / Kazusa).